Consider the following 109-residue polypeptide: Putative transposase MJ0856.1 (109 aa).

Zn(2+) contacts are provided by Cys-36, Cys-39, Cys-62, and Cys-65.

It belongs to the transposase 35 family.

The chain is Putative transposase MJ0856.1 from Methanocaldococcus jannaschii (strain ATCC 43067 / DSM 2661 / JAL-1 / JCM 10045 / NBRC 100440) (Methanococcus jannaschii).